The chain runs to 258 residues: tRNA pseudouridine synthase A (258 aa).

Asp-54 serves as the catalytic Nucleophile. Tyr-112 is a binding site for substrate.

The protein belongs to the tRNA pseudouridine synthase TruA family. As to quaternary structure, homodimer.

The enzyme catalyses uridine(38/39/40) in tRNA = pseudouridine(38/39/40) in tRNA. In terms of biological role, formation of pseudouridine at positions 38, 39 and 40 in the anticodon stem and loop of transfer RNAs. The sequence is that of tRNA pseudouridine synthase A from Geobacillus kaustophilus (strain HTA426).